Reading from the N-terminus, the 211-residue chain is MFTYYFQGLALGAAMILPLGPQNAFVMNQGIRRQYHLMIALLCAVSDLLLICAGIFGGSALLMQSPWLLAIVTWGGVAFLLWYGFGALKTAFSQNLELASAEVMQQGRWKIIITMLAVTWLNPHVYLDTFVVLGSLGGQLAVEPKRWFALGTISASFLWFFGLALLAAWLAPRLRTAKAQRIINIVVGAVMWFIAFQLAKEGVGHILALLN.

6 consecutive transmembrane segments (helical) span residues 1–21, 37–57, 68–88, 111–131, 147–167, and 182–202; these read MFTY…PLGP, LMIA…GIFG, LLAI…FGAL, IIIT…DTFV, WFAL…ALLA, and IINI…AKEG.

It belongs to the LysE/ArgO transporter (TC 2.A.75) family.

The protein localises to the cell inner membrane. It catalyses the reaction L-arginine(in) = L-arginine(out). In terms of biological role, involved in the export of arginine. Important to control the intracellular level of arginine and the correct balance between arginine and lysine. The polypeptide is Arginine exporter protein ArgO (Klebsiella pneumoniae (strain 342)).